Reading from the N-terminus, the 336-residue chain is MKLAIIGGDGIGPEVVAQAVKILDVVLPGVQKTTYDLGARRYHTTGELLPESVLAELREHDAILLGAVGDPSVPSGVLERGLLLRLRFELDHHINLRPARLYPGVNSLLAGKPDIDFVVVREGTEGPYTGTGGAIRVGTPNEVATEVSVNTAFGVRRVVQDAFERARQRRKHLTLVHKNNVLTYAGTLWCRIVQEVGEKYPDVEVVYQHIDAATIYLVTEPSRFDVIVTDNLFGDIITDLAAAVCGGIALAASGNIDATRTNPSMFEPVHGSAPDIAGQGIADPTAAIMSLALLLAHLGEDEPAARLDQAVASYLATRGNGRFSTGEVGERIAAAL.

Residues R87, R97, R121, and D211 each coordinate substrate. Positions 211, 235, and 239 each coordinate Mg(2+). Residue 271–283 (GSAPDIAGQGIAD) participates in NAD(+) binding.

This sequence belongs to the isocitrate and isopropylmalate dehydrogenases family. LeuB type 2 subfamily. As to quaternary structure, homodimer. Requires Mg(2+) as cofactor. Mn(2+) serves as cofactor.

Its subcellular location is the cytoplasm. The catalysed reaction is (2R,3S)-3-isopropylmalate + NAD(+) = 4-methyl-2-oxopentanoate + CO2 + NADH. It functions in the pathway amino-acid biosynthesis; L-leucine biosynthesis; L-leucine from 3-methyl-2-oxobutanoate: step 3/4. Catalyzes the oxidation of 3-carboxy-2-hydroxy-4-methylpentanoate (3-isopropylmalate) to 3-carboxy-4-methyl-2-oxopentanoate. The product decarboxylates to 4-methyl-2 oxopentanoate. The polypeptide is 3-isopropylmalate dehydrogenase (Mycobacterium leprae (strain Br4923)).